Consider the following 284-residue polypeptide: UDP-N-acetylenolpyruvoylglucosamine reductase (284 aa).

Residues 21 to 180 (KIGGPARLFV…LKAAFKLKKA (160 aa)) enclose the FAD-binding PCMH-type domain. Residue Arg159 is part of the active site. Ser209 (proton donor) is an active-site residue. Glu280 is a catalytic residue.

Belongs to the MurB family. Requires FAD as cofactor.

It is found in the cytoplasm. It carries out the reaction UDP-N-acetyl-alpha-D-muramate + NADP(+) = UDP-N-acetyl-3-O-(1-carboxyvinyl)-alpha-D-glucosamine + NADPH + H(+). It functions in the pathway cell wall biogenesis; peptidoglycan biosynthesis. Cell wall formation. This Pseudothermotoga lettingae (strain ATCC BAA-301 / DSM 14385 / NBRC 107922 / TMO) (Thermotoga lettingae) protein is UDP-N-acetylenolpyruvoylglucosamine reductase.